Here is a 209-residue protein sequence, read N- to C-terminus: Thymidylate kinase (209 aa).

Residue 10–17 (GIDGCGKT) coordinates ATP.

It belongs to the thymidylate kinase family.

It catalyses the reaction dTMP + ATP = dTDP + ADP. Phosphorylation of dTMP to form dTDP in both de novo and salvage pathways of dTTP synthesis. This Synechococcus sp. (strain CC9605) protein is Thymidylate kinase.